We begin with the raw amino-acid sequence, 186 residues long: ATP synthase subunit delta (186 aa).

This sequence belongs to the ATPase delta chain family. F-type ATPases have 2 components, F(1) - the catalytic core - and F(0) - the membrane proton channel. F(1) has five subunits: alpha(3), beta(3), gamma(1), delta(1), epsilon(1). CF(0) has four main subunits: a(1), b(1), b'(1) and c(10-14). The alpha and beta chains form an alternating ring which encloses part of the gamma chain. F(1) is attached to F(0) by a central stalk formed by the gamma and epsilon chains, while a peripheral stalk is formed by the delta, b and b' chains.

The protein resides in the cell inner membrane. Functionally, f(1)F(0) ATP synthase produces ATP from ADP in the presence of a proton or sodium gradient. F-type ATPases consist of two structural domains, F(1) containing the extramembraneous catalytic core and F(0) containing the membrane proton channel, linked together by a central stalk and a peripheral stalk. During catalysis, ATP synthesis in the catalytic domain of F(1) is coupled via a rotary mechanism of the central stalk subunits to proton translocation. In terms of biological role, this protein is part of the stalk that links CF(0) to CF(1). It either transmits conformational changes from CF(0) to CF(1) or is implicated in proton conduction. The polypeptide is ATP synthase subunit delta (Cereibacter sphaeroides (strain ATCC 17025 / ATH 2.4.3) (Rhodobacter sphaeroides)).